A 1584-amino-acid chain; its full sequence is MFAKLHGKKQRPISSINSQTPRTSNTTHANSISLSSGNLIVGSNRNLRQKKEQFGSQQRASGRKLISNKENDDNVNNGGDNNYDNGERVHRHHIPGLKIKAYQAELGYHESRFSENLVMLNLVEFPDIKPGDLVELKTYHKNPSASNGDKKIYFIAKDFDGETKRRAKTSNVSILSGQLQTLLDLPSRSRIWIKLKPNKFDLQADVVEFNIKDCLLNRGDMWVLSSKLVDTCVFMDQRLAFLDSIRGTIKGIYRNGKKIVSGYIGEQTRIIFRSESARLIFLIQITDEMWNFEETGEQLFQKMVNSFFPKIFKKWKDVDTHHTITIAFAISMDLSDTSFKDLTPGESLKNSQDYFRIVVDQVSIIHWVDIMETLREEFMEIRKDLLNKQTDKGYSVANGRFSPVIKSNFLELVNFATTILTDPFKQLDLRHTTTHVMIISPGSGLFDVDYSLLRLTGKKLLSLEMTMDLICLSKAPLHIVPLFRYRDFENKLHHCVPLWLSVFFWNDHDKKSNSEWTPRCKIYDLQMMGITENELIREVDVEYLQLNKKVKSLSEFMNDYDKNAFEVKILCAGSNTKQSKKLNSKFDTVFENDVVVKARKIPATATTTHGNTKFIWRGPKVALPAIKDIQKPNVIPDLSIKTIEASFYDDCNTTNDKISTPTTSNNDNLEMNDSLVSVRSADNQNTSLALDSLKGLSKRNSLKDFTQRVITKFISNIDTSKNKKIKSTLLRDDVDNSPLGSNTPLPSSESKISGLKLQQKGLADENVISKRGNLIIKKNLSIFGLPSNEIMSGSPSSYLGSSHTRTSSKLSNMSDKAAFITEGQKSKHDDSNTYSLTQQLKHRISETWVDIKSPSIPVSSEFANELLPIRWKDVWPKYVARKYSKWRSFTTPAELPITISDFPSKDDFDRNFIFRNHSVTLNTDQEQYNQTYKDLLRDMIYMRLLTGFQICVGRQVEKIELSRESGESETVVNKYLDFNQNDAFKLYLMIDSEIHRITCSSSGIIDVERYLRKDEANLFDQVPSYIPLVKTRYESSFRDAMIDPLHVKRESLNWNQIDQVLAGYGDNLIDRKWHGFRAKYVVLPTDIPPNTYSMVINGKSETLNPEEIRVEGLRRLIGSITRSRLRTEKEKKGRKTKREEIQPEVMFYTGPLYNFINEQQTSLESSAINFKDSIFVNDNNLLNRNVELSKLAYQIQRGEDRITLVNRKWHWKKHEKCFVGSEMVNWLIRNFSDIDTREDAIKYGQKVMKEGLFVHVLNKHNFLDGHYFYQFSPEYVMDTNKLEKTNSHRSTLSDPKQMLRKASTGSSNDPSAMTPFSSVVPAISASNASVADAKEPSRPILMLSNSLVIDVDPAGKSSKQESCTVHYDRVHNPDHCFHIRLEWLTTTPKLIDDLVGNWSRLCERYGLKMIEIPWEELCTIPSVNPFHSFVEIKLAINPWEDPEFKDRELFAKSKFYYHVYLLKASGFLLDNRASKFLQNQDIEFDIMYSWGKPQFKYVQYIHHTGAYVAELRENGCLFLAPNNIYISRVNPGNIIGKIHSASSSSLDAQKVILNFKSTCLDYQKLRSIFLDAKEMWITGKIVED.

Positions 1–11 are enriched in basic residues; sequence MFAKLHGKKQR. 2 disordered regions span residues 1-37 and 49-89; these read MFAKLHGKKQRPISSINSQTPRTSNTTHANSISLSSG and QKKE…GERV. Positions 12-37 are enriched in polar residues; sequence PISSINSQTPRTSNTTHANSISLSSG. The segment covering 74–84 has biased composition (low complexity); it reads NVNNGGDNNYD. Residues serine 680 and serine 737 each carry the phosphoserine modification. The segment at 732 to 752 is disordered; that stretch reads DDVDNSPLGSNTPLPSSESKI. Over residues 738-751 the composition is skewed to polar residues; sequence PLGSNTPLPSSESK. The DEP domain occupies 1198 to 1273; the sequence is GEDRITLVNR…DGHYFYQFSP (76 aa). The interval 1286-1312 is disordered; sequence NSHRSTLSDPKQMLRKASTGSSNDPSA. Positions 1303-1312 are enriched in polar residues; that stretch reads STGSSNDPSA.

It belongs to the IML1 family. In terms of assembly, component of the SEA complex composed of at least IML1/SEA1, RTC1/SEA2, MTC5/SEA3, NPR2, NPR3, SEA4, SEC13 and SEH1.

It is found in the vacuole membrane. In terms of biological role, component of the SEA complex which coats the vacuolar membrane and is involved in intracellular trafficking, autophagy, response to nitrogen starvation, and amino acid biogenesis. The protein is Vacuolar membrane-associated protein IML1 (IML1) of Saccharomyces cerevisiae (strain ATCC 204508 / S288c) (Baker's yeast).